Reading from the N-terminus, the 247-residue chain is 23S rRNA (guanosine-2'-O-)-methyltransferase RlmB (247 aa).

Glycine 197, isoleucine 217, and leucine 226 together coordinate S-adenosyl-L-methionine.

It belongs to the class IV-like SAM-binding methyltransferase superfamily. RNA methyltransferase TrmH family. RlmB subfamily.

The protein resides in the cytoplasm. It carries out the reaction guanosine(2251) in 23S rRNA + S-adenosyl-L-methionine = 2'-O-methylguanosine(2251) in 23S rRNA + S-adenosyl-L-homocysteine + H(+). In terms of biological role, specifically methylates the ribose of guanosine 2251 in 23S rRNA. The protein is 23S rRNA (guanosine-2'-O-)-methyltransferase RlmB of Vibrio parahaemolyticus serotype O3:K6 (strain RIMD 2210633).